Reading from the N-terminus, the 141-residue chain is Hemoglobin subunit alpha (141 aa).

The tract at residues 1–22 (VLSEDDKNRVRTSVGKNPELPG) is disordered. The Globin domain maps to 1 to 141 (VLSEDDKNRV…VSEVLESKYR (141 aa)). Residue H58 coordinates O2. Heme b is bound at residue H87.

The protein belongs to the globin family. Heterotetramer of two alpha chains and two beta chains. In terms of tissue distribution, red blood cells.

Involved in oxygen transport from the lung to the various peripheral tissues. The sequence is that of Hemoglobin subunit alpha (HBA) from Vipera aspis (Aspic viper).